A 5161-amino-acid chain; its full sequence is Nonribosomal peptide synthetase TES (5161 aa).

An adenylation 1 region spans residues 37-436 (EEQAIARPNA…GRKDSQTKVR (400 aa)). Positions 569 to 645 (QPETEKEQIL…KLTSAAIPSV (77 aa)) constitute a Carrier 1 domain. Position 606 is an O-(pantetheine 4'-phosphoryl)serine (Ser-606). A condensation 1 region spans residues 659–1098 (GHVAQSFAQG…LLCDVELSKL (440 aa)). Residues 1122–1522 (RQQTSLCPSR…GRMDGQVKIR (401 aa)) form an adenylation 2 region. The interval 1630 to 1742 (MNEWLDDTID…YLFKTTQQLL (113 aa)) is methyltransferase (M) domain 1. Residues 2068–2141 (TRAESKIQQL…QLAAVAQEHV (74 aa)) form the Carrier 2 domain. Ser-2102 carries the post-translational modification O-(pantetheine 4'-phosphoryl)serine. The tract at residues 2179–2593 (EDIYPCSPLQ…MLTQDDEQQL (415 aa)) is condensation 2. Residues 2614–3010 (DQAKSRPEAD…GRKDGQVKVR (397 aa)) are adenylation 3. The Carrier 3 domain maps to 3139–3215 (KPETKHEMAL…RLANRLVDPP (77 aa)). The residue at position 3176 (Ser-3176) is an O-(pantetheine 4'-phosphoryl)serine. A condensation 3 region spans residues 3232-3668 (LQSFAQGRLW…VVPLMTVEAH (437 aa)). The adenylation 4 stretch occupies residues 3694-4098 (FRQQAAMQPS…GRIDGQVKIR (405 aa)). The segment at 4203 to 4329 (EMKEWLEETI…KVDGVKTLFF (127 aa)) is methyltransferase (M) domain 2. Positions 4643–4725 (RELSTAELKV…QFSQHEGEQK (83 aa)) constitute a Carrier 4 domain. Residue Ser-4680 is modified to O-(pantetheine 4'-phosphoryl)serine. Positions 4785 to 5093 (FFLNLGTRVD…HQNLNEHPEF (309 aa)) are condensation 4.

Belongs to the NRP synthetase family.

The protein operates within phytotoxin biosynthesis. Functionally, nonribosomal peptide synthetase; part of the gene cluster that mediates the biosynthesis of the phytotoxin tentoxin, an inhibitor the F1-ATPase activity of chloroplasts, resulting in chlorosis in sensitive plants. Tentoxin is a cyclic tetrapeptide that consists of four amino acid residues: glycine (Gly), alanine (Ala), leucine (Leu), and dehydrophenylalanine (DPhe). In addition, both the Ala and DPhe residues are N-methylated. The nonribosomal peptide synthetase TES assembles tentoxin from the four substrate amino acids. The adenylation domains of each of the 4 modules are responsible for the activation of Gly, Ala, Leu and DPhe, respectively. In addition, the N-methyltransferase domains in the second and fourth modules of TES could be responsible for N-methylation of Ala and DPhe residues. Finally, the condensation domain located in the termination module probably catalyzes the formation of the intramolecular macrocyclization and then the release of tentoxin. The cytochrome P450 monooxygenase TES1 is predicted to be involved in the formation of DPhe. This Alternaria alternata (Alternaria rot fungus) protein is Nonribosomal peptide synthetase TES.